The primary structure comprises 140 residues: MRHARGYRRLNRTHEHRKALFANMAGSLIEHEQIKTTLPKAKELRPIVEKLITLAKRGDLHARRQAAAQLKQDSHVAKLFDVLGARYKDRQGGYVRIMKAGFRYGDMAPMAIIEFVERDTSAKGAADRARLEAESAADES.

This sequence belongs to the bacterial ribosomal protein bL17 family. Part of the 50S ribosomal subunit. Contacts protein L32.

The protein is Large ribosomal subunit protein bL17 of Paracoccus denitrificans (strain Pd 1222).